The primary structure comprises 73 residues: Translation initiation factor IF-1 (73 aa).

The region spanning 1–73 is the S1-like domain; sequence MSEKEAGIEV…SRGRITYRDK (73 aa).

Belongs to the IF-1 family. As to quaternary structure, component of the 30S ribosomal translation pre-initiation complex which assembles on the 30S ribosome in the order IF-2 and IF-3, IF-1 and N-formylmethionyl-tRNA(fMet); mRNA recruitment can occur at any time during PIC assembly.

It is found in the cytoplasm. One of the essential components for the initiation of protein synthesis. Stabilizes the binding of IF-2 and IF-3 on the 30S subunit to which N-formylmethionyl-tRNA(fMet) subsequently binds. Helps modulate mRNA selection, yielding the 30S pre-initiation complex (PIC). Upon addition of the 50S ribosomal subunit IF-1, IF-2 and IF-3 are released leaving the mature 70S translation initiation complex. This chain is Translation initiation factor IF-1, found in Anaeromyxobacter dehalogenans (strain 2CP-C).